The following is a 243-amino-acid chain: Ubiquinone/menaquinone biosynthesis C-methyltransferase UbiE (243 aa).

S-adenosyl-L-methionine contacts are provided by residues Thr69, Asp90, and 116-117; that span reads DA.

Belongs to the class I-like SAM-binding methyltransferase superfamily. MenG/UbiE family.

The catalysed reaction is a 2-demethylmenaquinol + S-adenosyl-L-methionine = a menaquinol + S-adenosyl-L-homocysteine + H(+). It catalyses the reaction a 2-methoxy-6-(all-trans-polyprenyl)benzene-1,4-diol + S-adenosyl-L-methionine = a 5-methoxy-2-methyl-3-(all-trans-polyprenyl)benzene-1,4-diol + S-adenosyl-L-homocysteine + H(+). The protein operates within quinol/quinone metabolism; menaquinone biosynthesis; menaquinol from 1,4-dihydroxy-2-naphthoate: step 2/2. Its pathway is cofactor biosynthesis; ubiquinone biosynthesis. Functionally, methyltransferase required for the conversion of demethylmenaquinol (DMKH2) to menaquinol (MKH2) and the conversion of 2-polyprenyl-6-methoxy-1,4-benzoquinol (DDMQH2) to 2-polyprenyl-3-methyl-6-methoxy-1,4-benzoquinol (DMQH2). In Ralstonia nicotianae (strain ATCC BAA-1114 / GMI1000) (Ralstonia solanacearum), this protein is Ubiquinone/menaquinone biosynthesis C-methyltransferase UbiE.